The following is a 595-amino-acid chain: Tumor necrosis factor receptor superfamily member 8 (595 aa).

A signal peptide spans 1-18 (MRVLLAALGLLFLGALRA). The Extracellular portion of the chain corresponds to 19 to 385 (FPQDRPFEDT…STGKPVLDAG (367 aa)). TNFR-Cys repeat units lie at residues 28-66 (TCHG…TDCR), 68-106 (QCEP…SRVC), and 107-150 (ECRP…TVCE). Intrachain disulfides connect Cys-29-Cys-44, Cys-45-Cys-58, Cys-48-Cys-65, Cys-69-Cys-81, Cys-84-Cys-98, Cys-87-Cys-106, Cys-108-Cys-122, and Cys-131-Cys-149. Asn-32 is a glycosylation site (N-linked (GlcNAc...) asparagine). Asn-101 is a glycosylation site (N-linked (GlcNAc...) asparagine). The tract at residues 167–238 (KEPSSGTIPQ…PTQPCPEGSG (72 aa)) is disordered. Over residues 179-194 (PTPVSPATSSASTMPV) the composition is skewed to low complexity. TNFR-Cys repeat units lie at residues 205–241 (ASKL…GDCR), 243–281 (QCEP…SRTC), and 282–325 (ECRP…TTFE). Intrachain disulfides connect Cys-233/Cys-240, Cys-244/Cys-256, Cys-259/Cys-273, Cys-262/Cys-281, Cys-283/Cys-297, and Cys-289/Cys-300. Asn-276 is a glycosylation site (N-linked (GlcNAc...) asparagine). The disordered stretch occupies residues 323 to 355 (TFEAPPLGTQPDCNPTPENGEAPASTSPTQSLL). The N-linked (GlcNAc...) asparagine glycan is linked to Asn-336. Positions 346–355 (ASTSPTQSLL) are enriched in polar residues. A helical membrane pass occupies residues 386 to 406 (PVLFWVILVLVVVVGSSAFLL). Residues 407 to 595 (CHRRACRKRI…DPLPTAASGK (189 aa)) lie on the Cytoplasmic side of the membrane. Ser-438 and Ser-452 each carry phosphoserine. Disordered regions lie at residues 438 to 457 (SRPR…TEPV), 485 to 509 (LQDA…STEH), and 536 to 595 (EGRG…ASGK). Polar residues predominate over residues 443–452 (SSTQLRSGAS). The segment covering 499 to 509 (DLPEPRVSTEH) has biased composition (basic and acidic residues).

The protein belongs to the TNFR8 family. In terms of assembly, interacts with TRAF1, TRAF2, TRAF3 and TRAF5. Phosphorylated on serine and tyrosine residues. Isoform 2 is constitutively phosphorylated. In terms of tissue distribution, detected in alveolar macrophages (at protein level).

It localises to the cell membrane. Its subcellular location is the cytoplasm. In terms of biological role, receptor for TNFSF8/CD30L. May play a role in the regulation of cellular growth and transformation of activated lymphoblasts. Regulates gene expression through activation of NF-kappa-B. This chain is Tumor necrosis factor receptor superfamily member 8, found in Homo sapiens (Human).